Reading from the N-terminus, the 1338-residue chain is P-type sodium-transporting ATPase4 (1338 aa).

The segment at 1 to 106 is disordered; that stretch reads MAARASADKL…KSISSVSQMH (106 aa). Residues 55–69 are compositionally biased toward basic and acidic residues; that stretch reads AEEKVAGHDGESPRR. Polar residues predominate over residues 91–104; the sequence is GHSQLGKSISSVSQ. The next 8 membrane-spanning stretches (helical) occupy residues 229–249, 255–275, 418–438, 456–476, 985–1005, 1068–1088, 1261–1281, and 1288–1308; these read IFIQ…AIAS, WVEG…ATYM, LGGM…VVAI, IVLV…PMVV, FVCF…IAIA, IFEA…CTGV, MHLA…VPGI, and CALP…NLIL.

It belongs to the cation transport ATPase (P-type) (TC 3.A.3) family.

Its subcellular location is the cell membrane. It catalyses the reaction Na(+)(in) + ATP + H2O = Na(+)(out) + ADP + phosphate + H(+). Inhibited by cipargamin, a synthetic spiroindolone. Inhibited by pyrazoleamide PA21A050, structurally unrelated to the spiroindolones. Inhibited by (+)-SJ733, a dihydroisoquinolone compound. Sodium-exporting ATPase. Required for the extrusion of Na(+) from the parasites to maintain a low cytosolic concentration of Na(+). Required for maintaining the viability of extracellular parasites but not for intracellular growth, egress or invasion. Involved in parasite virulence. The sequence is that of P-type sodium-transporting ATPase4 from Toxoplasma gondii (strain ATCC 50861 / VEG).